We begin with the raw amino-acid sequence, 609 residues long: Kelch-like protein 20 (609 aa).

The BTB domain maps to 68–135 (CDVVLVVGAK…AYTSQITVEE (68 aa)). In terms of domain architecture, BACK spans 170–272 (CLGIRAFADT…SPKFLVGTVG (103 aa)). 6 Kelch repeats span residues 319 to 365 (VLFA…VLDD), 367 to 413 (LYAV…VLGG), 414 to 460 (FLYA…VLGG), 462 to 507 (LYAV…VYQD), 509 to 554 (IYAV…VVNG), and 556 to 601 (LMAV…VIKM).

As to quaternary structure, component of the BCR(KLHL20) E3 ubiquitin ligase complex, at least composed of CUL3, KLHL20 and RBX1. Interacts with PDZ-RhoGEF/ARHGEF11, DAPK1, PML and CORO7. Interacts with F-actin. Interacts with IFN-gamma (IFNG). Interacts (via kelch repeats) with IVNS1ABP (via kelch repeats); this interaction blocks the assembly of CUL3-KLHL20 complex.

It is found in the cytoplasm. It localises to the perinuclear region. The protein localises to the nucleus. Its subcellular location is the golgi apparatus. The protein resides in the trans-Golgi network. It is found in the cell projection. It localises to the axon. The protein localises to the dendrite. The protein operates within protein modification; protein ubiquitination. In terms of biological role, substrate-specific adapter of a BCR (BTB-CUL3-RBX1) E3 ubiquitin-protein ligase complex involved in interferon response and anterograde Golgi to endosome transport. The BCR(KLHL20) E3 ubiquitin ligase complex mediates the ubiquitination of DAPK1, leading to its degradation by the proteasome, thereby acting as a negative regulator of apoptosis. The BCR(KLHL20) E3 ubiquitin ligase complex also specifically mediates 'Lys-33'-linked ubiquitination. Involved in anterograde Golgi to endosome transport by mediating 'Lys-33'-linked ubiquitination of CORO7, promoting interaction between CORO7 and EPS15, thereby facilitating actin polymerization and post-Golgi trafficking. Also acts as a regulator of endothelial migration during angiogenesis by controlling the activation of Rho GTPases. The BCR(KLHL20) E3 ubiquitin ligase complex acts as a regulator of neurite outgrowth by mediating ubiquitination and degradation of PDZ-RhoGEF/ARHGEF11. In Pongo abelii (Sumatran orangutan), this protein is Kelch-like protein 20 (KLHL20).